A 351-amino-acid polypeptide reads, in one-letter code: uncharacterized protein (351 aa).

The HTH lacI-type domain occupies 14 to 69 (PRLADIAAQAQVSEATASRVLNGRPASRXSTRQRVLAALDLLGYERPTRLRRRSAG). The H-T-H motif DNA-binding region spans 16–35 (LADIAAQAQVSEATASRVLN).

Functionally, putative sugar-binding regulatory protein for the alpha-amylase gene. This is an uncharacterized protein from Streptomyces limosus (Streptomyces albidoflavus).